The chain runs to 160 residues: Nucleotide-binding protein Bpet3698 (160 aa).

This sequence belongs to the YajQ family.

Functionally, nucleotide-binding protein. This is Nucleotide-binding protein Bpet3698 from Bordetella petrii (strain ATCC BAA-461 / DSM 12804 / CCUG 43448).